Consider the following 653-residue polypeptide: Chaperone protein HtpG (653 aa).

An a; substrate-binding region spans residues 1–361 (MSETNQVQNH…SNDLPLNVSR (361 aa)). The tract at residues 362–578 (EILQDNKVTQ…DDDMSSQMAK (217 aa)) is b. The c stretch occupies residues 579–653 (LMASVGQEVP…LNKLMLSLTK (75 aa)).

Belongs to the heat shock protein 90 family. Homodimer.

The protein resides in the cytoplasm. Its function is as follows. Molecular chaperone. Has ATPase activity. The protein is Chaperone protein HtpG of Colwellia psychrerythraea (strain 34H / ATCC BAA-681) (Vibrio psychroerythus).